The primary structure comprises 375 residues: CMP-N-acetylneuraminate-beta-1,4-galactoside alpha-2,3-sialyltransferase (375 aa).

Residues 1 to 8 lie on the Cytoplasmic side of the membrane; it reads MGLLVFVR. The helical; Signal-anchor for type II membrane protein transmembrane segment at 9–28 threads the bilayer; sequence NLLLALCLFLVLGFLYYSAW. Residues 29 to 375 are Lumenal-facing; it reads KLHLLQWEED…RVITDLSSGI (347 aa). N-linked (GlcNAc...) asparagine glycosylation is found at asparagine 80 and asparagine 171. An intrachain disulfide couples cysteine 160 to cysteine 314.

It belongs to the glycosyltransferase 29 family. Post-translationally, the soluble form derives from the membrane form by proteolytic processing. In terms of tissue distribution, highly expressed in adult skeletal muscle and in all fetal tissues examined and to a much lesser extent in placenta, lung and liver.

The protein localises to the golgi apparatus. It is found in the golgi stack membrane. It localises to the secreted. It carries out the reaction a beta-D-galactosyl-(1-&gt;4)-N-acetyl-beta-D-glucosaminyl derivative + CMP-N-acetyl-beta-neuraminate = an N-acetyl-alpha-neuraminyl-(2-&gt;3)-beta-D-galactosyl-(1-&gt;4)-N-acetyl-beta-D-glucosaminyl derivative + CMP + H(+). It functions in the pathway protein modification; protein glycosylation. Functionally, catalyzes the formation of the NeuAc-alpha-2,3-Gal-beta-1,4-GlcNAc-, NeuAc-alpha-2,3-Gal-beta-1,3-GlcNAc- and NeuAc-alpha-2,3-Gal-beta-1,3-GalNAc- sequences found in terminal carbohydrate groups of glycoproteins and glycolipids. The highest activity is toward Gal-beta-1,3-GlcNAc and the lowest toward Gal-beta-1,3-GalNAc. The sequence is that of CMP-N-acetylneuraminate-beta-1,4-galactoside alpha-2,3-sialyltransferase (ST3GAL3) from Homo sapiens (Human).